Consider the following 219-residue polypeptide: MSETAPAAAPDAPAPGAKAAAKKPKKAAGGAKARKPAGPSVTELITKAVSASKERKGLSLAALKKALAAGGYDVEKNNSRIKLGLKSLVSKGTLVQTKGTGASGSFRLNKKPGEVKEKAPRKRATAAKPKKPAAKKPAAAAKKPKKAAAVKKSPKKAKKPAAAATKKAAKSPKKAAKAGRPKKAAKSPAKAKAVKPKAAKPKATKPKAAKAKKTAAKKK.

Composition is skewed to low complexity over residues 1–19 (MSET…GAKA) and 27–39 (AAGG…PAGP). 2 disordered regions span residues 1–40 (MSET…AGPS) and 94–219 (LVQT…AKKK). Ser2 is modified (N-acetylserine). The 74-residue stretch at 37 to 110 (AGPSVTELIT…GASGSFRLNK (74 aa)) folds into the H15 domain. 4 stretches are compositionally biased toward basic residues: residues 119 to 134 (APRK…KPAA), 142 to 159 (KKPK…KAKK), 167 to 185 (KAAK…KKAA), and 192 to 219 (KAVK…AKKK).

Belongs to the histone H1/H5 family.

It localises to the nucleus. It is found in the chromosome. In terms of biological role, histones H1 are necessary for the condensation of nucleosome chains into higher-order structures. This chain is Histone H1.01, found in Gallus gallus (Chicken).